The primary structure comprises 623 residues: Kelch-like protein diablo (623 aa).

Positions 1-54 (MGDLPGSGSTAQPRDAAVTGTGGNSTAGGGSSVGSTAVDRPPSPARLSHTSEKH) are disordered. The residue at position 19 (threonine 19) is a Phosphothreonine. Over residues 20–32 (GTGGNSTAGGGSS) the composition is skewed to gly residues. Residues 72–139 (CDVVLNVGGR…CYTAHIIVEE (68 aa)) form the BTB domain. The region spanning 174–276 (CLGIRAFADT…SPKFLVGTVG (103 aa)) is the BACK domain. Kelch repeat units lie at residues 323-369 (VLFA…VLND), 371-417 (LYAV…VLDE), 418-464 (FLYA…VLGG), 466-511 (LYAI…VFNN), 513-558 (IYAV…VVNG), and 559-605 (QLYA…VMRA).

It functions in the pathway protein modification; protein ubiquitination. Functionally, probable substrate-specific adapter of an E3 ubiquitin-protein ligase complex which mediates the ubiquitination and subsequent proteasomal degradation of target proteins. May have a role in synapse differentiation and growth. In Drosophila simulans (Fruit fly), this protein is Kelch-like protein diablo.